The primary structure comprises 349 residues: GDSL esterase/lipase At1g58525 (349 aa).

A signal peptide spans 1 to 19 (MKLQILLLALVLIAVEANA). An N-linked (GlcNAc...) asparagine glycan is attached at Asn25. The active-site Nucleophile is Ser37. The N-linked (GlcNAc...) asparagine glycan is linked to Asn316. Catalysis depends on residues Asp324 and His327.

It belongs to the 'GDSL' lipolytic enzyme family.

The protein resides in the secreted. The sequence is that of GDSL esterase/lipase At1g58525 from Arabidopsis thaliana (Mouse-ear cress).